We begin with the raw amino-acid sequence, 261 residues long: tRNA pseudouridine synthase A (261 aa).

The active-site Nucleophile is the Asp51. Tyr109 serves as a coordination point for substrate.

It belongs to the tRNA pseudouridine synthase TruA family. As to quaternary structure, homodimer.

It catalyses the reaction uridine(38/39/40) in tRNA = pseudouridine(38/39/40) in tRNA. Its function is as follows. Formation of pseudouridine at positions 38, 39 and 40 in the anticodon stem and loop of transfer RNAs. In Shewanella baltica (strain OS185), this protein is tRNA pseudouridine synthase A.